The sequence spans 662 residues: ATP-dependent RNA helicase DDX3X (662 aa).

Position 2 is an N-acetylserine (S2). A required for TBK1 and IKBKE-dependent IFNB1 activation region spans residues 2 to 139 (SHVAVENALG…KSDEDDWSKP (138 aa)). A Nuclear export signal motif is present at residues 12–21 (LDQQFAGLDL). The segment at 19–144 (LDLNSSDNQS…DWSKPLPPSE (126 aa)) is disordered. The segment covering 21-34 (LNSSDNQSGGSTAS) has biased composition (polar residues). An interaction with EIF4E region spans residues 38–44 (YIPPHLR). Over residues 44–68 (RNREATKGFYDKDSSGWSSSKDKDA) the composition is skewed to basic and acidic residues. An N6-acetyllysine modification is found at K55. The span at 70-89 (SSFGSRSDSRGKSSFFSDRG) shows a compositional bias: low complexity. The interval 81-90 (KSSFFSDRGS) is interaction with VACV protein K7. Phosphoserine occurs at positions 82, 86, and 90. The tract at residues 88 to 123 (RGSGSRGRFDDRGRSDYDGIGSRGDRSGFGKFERGG) is involved in binding to RNA G-quadruplex. Residues 94-130 (GRFDDRGRSDYDGIGSRGDRSGFGKFERGGNSRWCDK) show a composition bias toward basic and acidic residues. Positions 100-110 (GRSDYDGIGSR) are interaction with IKBKE. The tract at residues 100-662 (GRSDYDGIGS…NSQGVDWWGN (563 aa)) is interaction with GSK3B. At R101 the chain carries Omega-N-methylarginine. S102 is modified (phosphoserine; by IKKE). Residue Y104 is modified to Phosphotyrosine. R110 carries the omega-N-methylarginine modification. At K118 the chain carries N6-acetyllysine. Phosphoserine is present on S131. An interaction with CHUK region spans residues 139 to 172 (PLPPSERLEQELFSGGNTGINFEKYDDIPVEATG). The Q motif motif lies at 180–208 (ESFSDVEMGEIIMGNIELTRYTRPTPVQK). Residue S181 is modified to Phosphoserine; by TBK1; in vitro. S183 carries the post-translational modification Phosphoserine; by TBK1. An ATP-binding site is contributed by 200–207 (YTRPTPVQ). In terms of domain architecture, Helicase ATP-binding spans 211–403 (IPIIKEKRDL…RDFLDEYIFL (193 aa)). K215 is covalently cross-linked (Glycyl lysine isopeptide (Lys-Gly) (interchain with G-Cter in SUMO2)). 224-231 (AQTGSGKT) lines the ATP pocket. S240 is modified (phosphoserine; by TBK1; in vitro). Positions 250–259 (ALRAMKENGR) are involved in stimulation of ATPase activity by DNA and RNA, nucleic acid binding and unwinding and HIV-1 replication. The residue at position 269 (S269) is a Phosphoserine; by TBK1; in vitro. The DEAD box motif lies at 347–350 (DEAD). Residues 409-662 (GSTSENITQK…NSQGVDWWGN (254 aa)) are interaction with HCV core protein. One can recognise a Helicase C-terminal domain in the interval 414 to 575 (NITQKVVWVE…EVPSWLENMA (162 aa)). A Phosphoserine; by CSNK1E and TBK1; in vitro modification is found at S429. A Phosphothreonine; by TBK1; in vitro modification is found at T438. 2 positions are modified to phosphoserine; by TBK1; in vitro: S442 and S456. Position 469 is a phosphothreonine; by CSNK1E; in vitro (T469). At S470 the chain carries Phosphoserine; by CSNK1E; in vitro. S520 bears the Phosphoserine; by TBK1; in vitro mark. The interaction with NXF1 stretch occupies residues 536-661 (GNLGLATSFF…YNSQGVDWWG (126 aa)). At T542 the chain carries Phosphothreonine; by TBK1; in vitro. S543 is subject to Phosphoserine; by CSNK1E and TBK1; in vitro. At R592 the chain carries Omega-N-methylarginine. 3 positions are modified to phosphoserine: S594, S605, and S612. A disordered region spans residues 601–634 (DYRQSSGASSSSFSSSRASSSRSGGGGHGSSRGF). Over residues 604–622 (QSSGASSSSFSSSRASSSR) the composition is skewed to low complexity. An omega-N-methylarginine mark is found at R617 and R632. Positions 623–634 (SGGGGHGSSRGF) are enriched in gly residues.

It belongs to the DEAD box helicase family. DDX3/DED1 subfamily. Homodimer; can bind RNA as a monomer and as a dimer/oligomer. Interacts with TDRD3. Interacts (when phosphorylated at Ser-102) with IRF3; the interaction facilitates the phosphorylation and activation of IRF3 by IKBKE. Directly interacts with XPO1/CRM1. The interaction with XPO1/CMR1 is dependent on the DDX3X nuclear export signal motif and XPO1 interaction with GTPase RAN in its active GTP-bound form. Weakly interacts with TBKBP1/SINTBAD. Directly interacts with TRAF3; this interaction stimulates TRAF3 'Lys-63' ubiquitination. Interacts with CSNK1E in a Wnt-dependent manner; this interaction greatly enhances CSNK1E affinity for ATP, stimulates its kinase activity and promotes CSNK1E-mediated DVL2 phosphorylation. In the presence of RNA, the interaction is decreased. Also interacts with CSNK1D and stimulates its kinase activity. Interacts with TRPV4; this interaction is decreased when the TRPV4 channel is activated, leading to DDX3X relocalization to the nucleus. Interacts with MAP3K14/NIK. Directly interacts with CHUK/IKKA after physiological activation of the TLR7 and TLR8 pathways; this interaction enhances CHUK autophosphorylation. May associate with EIF4F complex, composed of at least EIF4A, EIF4E and EIF4G1/EIF4G3. Directly interacts with EIF4E in an RNA-independent manner; this interaction enhances EIF4E cap-binding ability. Directly interacts with EIF4G1 in an RNA-independent manner. DDX3X competes with EIF4G1 for interaction with EIF4E. Interacts with EIF4A1 and EIF2S1 in an RNA-independent manner. Associates with the eukaryotic translation initiation factor 3 (eIF-3) complex, including with EIF3B and EIF3C subunits. Directly interacts with IKBKE/IKKE; this interaction stimulates IKBKE activating autophosphorylation and is induced upon viral infection. Interacts with TBK1. Interacts with SP1; this interaction potentiates SP1-induced CDKN1A/WAF1/CIP1 transcription. Interacts with GSK3A and GSK3B. Interacts with several death receptors, inclusing FAS, TNFRSF10A and TNFRSF10B. Recruited to TNFRSF10B in the absence of receptor stimulation. When TNFRSF10B is stimulated, further recruited to the receptor and cleaved by caspases. A large proteolytic fragment remains associated with TNFRSF10B. Interacts (via C-terminus) with NXF1/TAP; this interaction may be partly involved in DDX3X nuclear export and in NXF1 localization to stress granules. Identified in an mRNP complex, composed of at least DHX9, DDX3X, ELAVL1, HNRNPU, IGF2BP1/2, ILF3, PABPC1, PCBP2, PTBP2, STAU1, STAU2, SYNCRIP and YBX1. The interaction with IGF2BP1/2 is RNA-dependent. Directly interacts with PABPC1/PABP1 in an RNA-independent manner. This interaction increases in stressed cells and decreases during cell recovery. Interacts (via C-terminus) with MAVS/IPS-1; this interaction occurs rapidly, but transiently after Sendai virus infection. The interaction potentiates MAVS-mediated IFNB induction. Interacts with ERCC6/CBS. Interacts with DHX33 in an RNA-independent manner. Interacts with DDX5 in the cytoplasm; this interaction may be more efficient when both proteins are unphosphorylated. Interacts with RIGI/RIG-1. Interacts with IFIH1/MDA5. Interacts with NCAPH; this interaction may be important for the NCAPH localization at condensing chromosomes during mitosis. Interacts with NLRP3 (via NACHT domain) under inflammasome-activating conditions. Interacts with CAPRIN1. Interacts with HNF4A and NR0B2/SHP in an RNA-independent manner; this interaction disrupts the interaction between HNF4 and NR0B2 that forms inactive heterodimers and enhances the formation of active HNF4 homodimers. Interacts with CREBBP/CBP. Interacts with EP300/p300. Interacts with gamma-tubulin. Interacts with phosphorylated TP53. Directly interacts with RELA/p65; this interaction may trap RELA in the cytoplasm, impairing nuclear relocalization upon TNF activating signals. As to quaternary structure, (Microbial infection) Interacts with hepatitis B virus (HBV) polymerase in the cytoplasm; this interaction may inhibit DDX3X interaction with the IKBKE/TBK1 complex, and hence impair IKBKE/TBK1-mediated increase in IFNB production. In terms of assembly, (Microbial infection) Directly interacts with hepatitis C virus (HCV) core protein in the cytoplasm. (Microbial infection) Interacts with vaccinia virus (VACV) protein K7. As to quaternary structure, (Microbial infection) Interacts with HIV-1 protein Rev. In terms of assembly, (Microbial infection) Interacts with Venezuelan equine encephalitis virus non-structural protein 3. In terms of processing, phosphorylated by TBK1; the phosphorylation is required for the synergistic induction of IFNB mediated by TBK1 and DDX3X. Phosphorylated by IKBKE at Ser-102 after ssRNA viral infection; enhances the induction of INFB promoter by IRF3. The cytoplasmic form is highly phosphorylated in the G1/S phase of the cell cycle and much less at G2/M. Phosphorylation by CSNK1E may inhibit RNA-stimulated ATPase activity. Upon stimulation of death receptors, including TNFRSF10B, recruited to receptors and cleaved by caspases. Proteolytic fragments remain associated with the receptors. This cleavage presumably inactivates DDX3X anti-apoptotic function. Post-translationally, ubiquitinated by RNF39 via 'Lys-48'-linked ubiquitination; leading to proteasomal degradation. As to expression, widely expressed. In testis, expressed in spermatids. Expressed in epidermis and liver (at protein level).

Its subcellular location is the cell membrane. It localises to the nucleus. The protein localises to the cytoplasm. The protein resides in the stress granule. It is found in the inflammasome. Its subcellular location is the cell projection. It localises to the lamellipodium. The protein localises to the cytoskeleton. The protein resides in the microtubule organizing center. It is found in the centrosome. It carries out the reaction ATP + H2O = ADP + phosphate + H(+). Its function is as follows. Multifunctional ATP-dependent RNA helicase. The ATPase activity can be stimulated by various ribo-and deoxynucleic acids indicative for a relaxed substrate specificity. In vitro can unwind partially double-stranded DNA with a preference for 5'-single-stranded DNA overhangs. Binds RNA G-quadruplex (rG4s) structures, including those located in the 5'-UTR of NRAS mRNA. Involved in many cellular processes, which do not necessarily require its ATPase/helicase catalytic activities. Involved in transcription regulation. Positively regulates CDKN1A/WAF1/CIP1 transcription in an SP1-dependent manner, hence inhibits cell growth. This function requires its ATPase, but not helicase activity. CDKN1A up-regulation may be cell-type specific. Binds CDH1/E-cadherin promoter and represses its transcription. Potentiates HNF4A-mediated MTTP transcriptional activation; this function requires ATPase, but not helicase activity. Facilitates HNF4A acetylation, possibly catalyzed by CREBBP/EP300, thereby increasing the DNA-binding affinity of HNF4 to its response element. In addition, disrupts the interaction between HNF4 and SHP that forms inactive heterodimers and enhances the formation of active HNF4 homodimers. By promoting HNF4A-induced MTTP expression, may play a role in lipid homeostasis. May positively regulate TP53 transcription. Associates with mRNPs, predominantly with spliced mRNAs carrying an exon junction complex (EJC). Involved in the regulation of translation initiation. Not involved in the general process of translation, but promotes efficient translation of selected complex mRNAs, containing highly structured 5'-untranslated regions (UTR). This function depends on helicase activity. Might facilitate translation by resolving secondary structures of 5'-UTRs during ribosome scanning. Alternatively, may act prior to 43S ribosomal scanning and promote 43S pre-initiation complex entry to mRNAs exhibiting specific RNA motifs, by performing local remodeling of transcript structures located close to the cap moiety. Independently of its ATPase activity, promotes the assembly of functional 80S ribosomes and disassembles from ribosomes prior to the translation elongation process. Positively regulates the translation of cyclin E1/CCNE1 mRNA and consequently promotes G1/S-phase transition during the cell cycle. May activate TP53 translation. Required for endoplasmic reticulum stress-induced ATF4 mRNA translation. Independently of its ATPase/helicase activity, enhances IRES-mediated translation; this activity requires interaction with EIF4E. Independently of its ATPase/helicase activity, has also been shown specifically repress cap-dependent translation, possibly by acting on translation initiation factor EIF4E. Involved in innate immunity, acting as a viral RNA sensor. Binds viral RNAs and promotes the production of type I interferon (IFN-alpha and IFN-beta). Potentiate MAVS/RIGI-mediated induction of IFNB in early stages of infection. Enhances IFNB1 expression via IRF3/IRF7 pathway and participates in NFKB activation in the presence of MAVS and TBK1. Involved in TBK1 and IKBKE-dependent IRF3 activation leading to IFNB induction, acts as a scaffolding adapter that links IKBKE and IRF3 and coordinates their activation. Involved in the TLR7/TLR8 signaling pathway leading to type I interferon induction, including IFNA4 production. In this context, acts as an upstream regulator of IRF7 activation by MAP3K14/NIK and CHUK/IKKA. Stimulates CHUK autophosphorylation and activation following physiological activation of the TLR7 and TLR8 pathways, leading to MAP3K14/CHUK-mediated activatory phosphorylation of IRF7. Also stimulates MAP3K14/CHUK-dependent NF-kappa-B signaling. Negatively regulates TNF-induced IL6 and IL8 expression, via the NF-kappa-B pathway. May act by interacting with RELA/p65 and trapping it in the cytoplasm. May also bind IFNB promoter; the function is independent of IRF3. Involved in both stress and inflammatory responses. Independently of its ATPase/helicase activity, required for efficient stress granule assembly through its interaction with EIF4E, hence promotes survival in stressed cells. Independently of its helicase activity, regulates NLRP3 inflammasome assembly through interaction with NLRP3 and hence promotes cell death by pyroptosis during inflammation. This function is independent of helicase activity. Therefore DDX3X availability may be used to interpret stress signals and choose between pro-survival stress granules and pyroptotic NLRP3 inflammasomes and serve as a live-or-die checkpoint in stressed cells. In association with GSK3A/B, negatively regulates extrinsic apoptotic signaling pathway via death domain receptors, including TNFRSF10B, slowing down the rate of CASP3 activation following death receptor stimulation. Cleavage by caspases may inactivate DDX3X and relieve the inhibition. Independently of its ATPase/helicase activity, allosteric activator of CSNK1E. Stimulates CSNK1E-mediated phosphorylation of DVL2, thereby involved in the positive regulation of Wnt/beta-catenin signaling pathway. Also activates CSNK1A1 and CSNK1D in vitro, but it is uncertain if these targets are physiologically relevant. ATPase and casein kinase-activating functions are mutually exclusive. May be involved in mitotic chromosome segregation. Functionally, (Microbial infection) Facilitates hepatitis C virus (HCV) replication. During infection, HCV core protein inhibits the interaction between MAVS and DDX3X and therefore impairs MAVS-dependent INFB induction and might recruit DDX3X to HCV replication complex. In terms of biological role, (Microbial infection) Facilitates HIV-1 replication. Acts as a cofactor for XPO1-mediated nuclear export of HIV-1 Rev RNAs. This function is strongly stimulated in the presence of TBK1 and requires DDX3X ATPase activity. (Microbial infection) Facilitates Zika virus (ZIKV) replication. Its function is as follows. (Microbial infection) Facilitates Dengue virus (DENV) replication. Functionally, (Microbial infection) Facilitates Venezuelan equine encephalitis virus (VEEV) replication. The protein is ATP-dependent RNA helicase DDX3X (DDX3X) of Homo sapiens (Human).